Here is a 249-residue protein sequence, read N- to C-terminus: NAD(P)H-quinone oxidoreductase subunit K 2 (249 aa).

Residues Cys54, Cys55, Cys119, and Cys150 each contribute to the [4Fe-4S] cluster site.

This sequence belongs to the complex I 20 kDa subunit family. NDH-1 can be composed of about 15 different subunits; different subcomplexes with different compositions have been identified which probably have different functions. Requires [4Fe-4S] cluster as cofactor.

Its subcellular location is the cell inner membrane. The enzyme catalyses a plastoquinone + NADH + (n+1) H(+)(in) = a plastoquinol + NAD(+) + n H(+)(out). It carries out the reaction a plastoquinone + NADPH + (n+1) H(+)(in) = a plastoquinol + NADP(+) + n H(+)(out). Functionally, NDH-1 shuttles electrons from an unknown electron donor, via FMN and iron-sulfur (Fe-S) centers, to quinones in the respiratory and/or the photosynthetic chain. The immediate electron acceptor for the enzyme in this species is believed to be plastoquinone. Couples the redox reaction to proton translocation, and thus conserves the redox energy in a proton gradient. Cyanobacterial NDH-1 also plays a role in inorganic carbon-concentration. The chain is NAD(P)H-quinone oxidoreductase subunit K 2 from Gloeobacter violaceus (strain ATCC 29082 / PCC 7421).